A 321-amino-acid polypeptide reads, in one-letter code: uncharacterized protein (321 aa).

The signal sequence occupies residues 1–18; that stretch reads MKKMKKLLLLLSASFAFS.

This is an uncharacterized protein from Aquifex aeolicus (strain VF5).